The primary structure comprises 466 residues: Putative chitinase (466 aa).

A signal peptide spans 1 to 17 (MYLTIWLVSILALGTWG). In terms of domain architecture, GH18 spans 20–380 (FNRFCHYNSW…MAVIHGLNAY (361 aa)). Cys24 and Cys49 form a disulfide bridge. The Proton donor role is filled by Glu141. Residues 408–442 (NYRRRNQQEKVAEMEQRIRHLEQELQQSMGNMAYE) are a coiled coil.

The protein belongs to the glycosyl hydrolase 18 family. In terms of tissue distribution, prismatic layer of shell (at protein level). Expressed primarily in the mantle with highest level in the mantle edge and lower level in the mantle pallium.

The protein localises to the secreted. The catalysed reaction is Random endo-hydrolysis of N-acetyl-beta-D-glucosaminide (1-&gt;4)-beta-linkages in chitin and chitodextrins.. In Pinctada maxima (Silver-lipped pearl oyster), this protein is Putative chitinase.